The chain runs to 445 residues: Phosphoglucosamine mutase (445 aa).

Ser-104 acts as the Phosphoserine intermediate in catalysis. Mg(2+) contacts are provided by Ser-104, Asp-243, Asp-245, and Asp-247. At Ser-104 the chain carries Phosphoserine.

It belongs to the phosphohexose mutase family. Mg(2+) is required as a cofactor. In terms of processing, activated by phosphorylation.

The enzyme catalyses alpha-D-glucosamine 1-phosphate = D-glucosamine 6-phosphate. Its function is as follows. Catalyzes the conversion of glucosamine-6-phosphate to glucosamine-1-phosphate. The polypeptide is Phosphoglucosamine mutase (Chromobacterium violaceum (strain ATCC 12472 / DSM 30191 / JCM 1249 / CCUG 213 / NBRC 12614 / NCIMB 9131 / NCTC 9757 / MK)).